The chain runs to 689 residues: Bifunctional protein GAL10 (689 aa).

A galactowaldenase region spans residues 1 to 345; it reads MSYILVTGGA…TTKNPFGFQI (345 aa). Residue 3–34 coordinates NAD(+); it reads YILVTGGAGYIGSHTVVELVNNGYNVVVVDNL. The interval 346–689 is mutarotase; that stretch reads NNYSWTKFDS…SYTIYRFENF (344 aa). Histidine 534 acts as the For mutarotase activity in catalysis.

This sequence in the N-terminal section; belongs to the NAD(P)-dependent epimerase/dehydratase family. It in the C-terminal section; belongs to the aldose epimerase family. The cofactor is NAD(+).

It catalyses the reaction UDP-alpha-D-glucose = UDP-alpha-D-galactose. The enzyme catalyses alpha-D-glucose = beta-D-glucose. The protein operates within carbohydrate metabolism; galactose metabolism. Its pathway is carbohydrate metabolism; hexose metabolism. Its function is as follows. Mutarotase converts alpha-aldose to the beta-anomer. It is active on D-glucose, L-arabinose, D-xylose, D-galactose, maltose and lactose. In Pachysolen tannophilus (Yeast), this protein is Bifunctional protein GAL10 (GAL10).